The following is a 341-amino-acid chain: Heme A synthase (341 aa).

Helical transmembrane passes span Val7–Ile27, Leu92–Lys112, Met118–Phe138, Leu159–Val179, Phe190–Val210, Phe253–Leu273, Leu280–Val300, and Ile302–Met322. Heme is bound at residue His255. A heme-binding site is contributed by His308.

The protein belongs to the COX15/CtaA family. Type 2 subfamily. In terms of assembly, interacts with CtaB. It depends on heme b as a cofactor.

It is found in the cell membrane. The enzyme catalyses Fe(II)-heme o + 2 A + H2O = Fe(II)-heme a + 2 AH2. It participates in porphyrin-containing compound metabolism; heme A biosynthesis; heme A from heme O: step 1/1. Its function is as follows. Catalyzes the conversion of heme O to heme A by two successive hydroxylations of the methyl group at C8. The first hydroxylation forms heme I, the second hydroxylation results in an unstable dihydroxymethyl group, which spontaneously dehydrates, resulting in the formyl group of heme A. This is Heme A synthase from Anaplasma marginale (strain St. Maries).